Here is a 181-residue protein sequence, read N- to C-terminus: Adenine phosphoribosyltransferase (181 aa).

Belongs to the purine/pyrimidine phosphoribosyltransferase family. Homodimer.

Its subcellular location is the cytoplasm. The catalysed reaction is AMP + diphosphate = 5-phospho-alpha-D-ribose 1-diphosphate + adenine. It functions in the pathway purine metabolism; AMP biosynthesis via salvage pathway; AMP from adenine: step 1/1. Functionally, catalyzes a salvage reaction resulting in the formation of AMP, that is energically less costly than de novo synthesis. This chain is Adenine phosphoribosyltransferase, found in Vibrio campbellii (strain ATCC BAA-1116).